The primary structure comprises 269 residues: Energy-coupling factor transporter ATP-binding protein EcfA1 (269 aa).

The 235-residue stretch at I8–D242 folds into the ABC transporter domain. G42 to S49 provides a ligand contact to ATP.

This sequence belongs to the ABC transporter superfamily. Energy-coupling factor EcfA family. As to quaternary structure, forms a stable energy-coupling factor (ECF) transporter complex composed of 2 membrane-embedded substrate-binding proteins (S component), 2 ATP-binding proteins (A component) and 2 transmembrane proteins (T component).

The protein localises to the cell membrane. ATP-binding (A) component of a common energy-coupling factor (ECF) ABC-transporter complex. Unlike classic ABC transporters this ECF transporter provides the energy necessary to transport a number of different substrates. This is Energy-coupling factor transporter ATP-binding protein EcfA1 from Staphylococcus aureus (strain USA300).